The primary structure comprises 675 residues: Acetyl-coenzyme A synthetase 1 (675 aa).

The segment covering 1–10 has biased composition (polar residues); sequence MPESTQQSHL. Residues 1–32 are disordered; that stretch reads MPESTQQSHLSLDHEKMQQPPKGFTERSKTKP. CoA contacts are provided by residues 212–215 and threonine 331; that span reads RGGK. ATP-binding positions include 407 to 409, 431 to 436, aspartate 522, and arginine 537; these read GEP and DTYWQT. A CoA-binding site is contributed by serine 545. Arginine 548 contributes to the ATP binding site. Arginine 609 contacts CoA.

The protein belongs to the ATP-dependent AMP-binding enzyme family.

The catalysed reaction is acetate + ATP + CoA = acetyl-CoA + AMP + diphosphate. The chain is Acetyl-coenzyme A synthetase 1 (ACS1) from Candida albicans (Yeast).